A 328-amino-acid polypeptide reads, in one-letter code: Transcription factor bHLH25 (328 aa).

The segment at 125–152 is disordered; that stretch reads PHQKSDEFNRKGTKRAQPFSRNQSNAQD. The region spanning 148–197 is the bHLH domain; sequence SNAQDHIIAERKRREKLTQRFVALSALVPGLKKMDKASVLGDALKHIKYL.

As to quaternary structure, homodimer. As to expression, expressed in flowers.

Its subcellular location is the nucleus. The protein is Transcription factor bHLH25 (BHLH25) of Arabidopsis thaliana (Mouse-ear cress).